The chain runs to 524 residues: Na(+)/H(+) antiporter NhaG (524 aa).

11 helical membrane-spanning segments follow: residues 6–26 (LHHI…ITAI), 33–53 (PYPI…IPLF), 59–79 (FITE…PALL), 98–118 (VLAL…SSMW), 126–146 (AAFV…LSIF), 169–189 (LAVV…DLGI), 193–213 (GLGL…GGVL), 242–262 (FLLA…AALI), 283–303 (FWDV…GLEI), 312–332 (WGLA…AVYI), and 374–394 (DILV…GLTI).

Belongs to the monovalent cation:proton antiporter 1 (CPA1) transporter (TC 2.A.36) family.

It is found in the cell membrane. Functionally, na(+)/H(+) antiporter that extrudes sodium in exchange for external protons. Can also transport lithium. The chain is Na(+)/H(+) antiporter NhaG (nhaG) from Bacillus atrophaeus.